A 342-amino-acid chain; its full sequence is Farnesyl pyrophosphate synthase (342 aa).

The isopentenyl diphosphate site is built by lysine 47, arginine 50, and glutamine 86. Aspartate 93 and aspartate 97 together coordinate Mg(2+). Residue arginine 102 participates in dimethylallyl diphosphate binding. Arginine 103 contributes to the isopentenyl diphosphate binding site. Dimethylallyl diphosphate-binding residues include lysine 190, threonine 191, glutamine 229, lysine 246, and lysine 255.

It belongs to the FPP/GGPP synthase family. As to quaternary structure, homodimer. It depends on Mg(2+) as a cofactor. In terms of tissue distribution, mostly expressed in roots and seeds, and to a lower extent, in leaves and stems.

It localises to the cytoplasm. It catalyses the reaction isopentenyl diphosphate + dimethylallyl diphosphate = (2E)-geranyl diphosphate + diphosphate. The enzyme catalyses isopentenyl diphosphate + (2E)-geranyl diphosphate = (2E,6E)-farnesyl diphosphate + diphosphate. Its pathway is isoprenoid biosynthesis; farnesyl diphosphate biosynthesis; farnesyl diphosphate from geranyl diphosphate and isopentenyl diphosphate: step 1/1. It participates in isoprenoid biosynthesis; geranyl diphosphate biosynthesis; geranyl diphosphate from dimethylallyl diphosphate and isopentenyl diphosphate: step 1/1. Its activity is regulated as follows. Stimulated by methyl jasmonate (MeJA). Its function is as follows. Catalyzes the sequential condensation of isopentenyl pyrophosphate with the allylic pyrophosphates, dimethylallyl pyrophosphate, and then with the resultant geranylpyrophosphate to the ultimate product farnesyl pyrophosphate. Component of the triterpene saponins (e.g. ginsenosides or panaxosides) and phytosterols biosynthetic pathways. Promotes the accumulation of ginsenosides. This Panax ginseng (Korean ginseng) protein is Farnesyl pyrophosphate synthase.